The chain runs to 152 residues: Proteolipid protein 2 (152 aa).

One can recognise an MARVEL domain in the interval 19–138; sequence FSRTKKGILL…DAYITFPLKQ (120 aa). 4 helical membrane-spanning segments follow: residues 25-45, 48-68, 85-105, and 112-132; these read GILL…FSAS, SAYS…LVFY, DFFR…VVLV, and RVVA…DAYI.

It localises to the membrane. In terms of biological role, may play a role in cell differentiation in the intestinal epithelium. This chain is Proteolipid protein 2 (Plp2), found in Mus musculus (Mouse).